A 617-amino-acid polypeptide reads, in one-letter code: Chaperone protein DnaK (617 aa).

The segment at 579 to 617 (KAQQEAQQASGEAGSADARGPDETVVDADYEVVDDEKRK) is disordered. Residues 580 to 594 (AQQEAQQASGEAGSA) are compositionally biased toward low complexity. The span at 602 to 617 (TVVDADYEVVDDEKRK) shows a compositional bias: acidic residues.

Belongs to the heat shock protein 70 family.

Its function is as follows. Acts as a chaperone. The polypeptide is Chaperone protein DnaK (Methanosarcina acetivorans (strain ATCC 35395 / DSM 2834 / JCM 12185 / C2A)).